A 148-amino-acid polypeptide reads, in one-letter code: Large ribosomal subunit protein bL9 (148 aa).

This sequence belongs to the bacterial ribosomal protein bL9 family.

Binds to the 23S rRNA. The polypeptide is Large ribosomal subunit protein bL9 (Geobacter metallireducens (strain ATCC 53774 / DSM 7210 / GS-15)).